Here is a 797-residue protein sequence, read N- to C-terminus: Outer membrane protein assembly factor BamA (797 aa).

A signal peptide spans 1 to 21 (MKLKQIASALMMLGISPLALA). 5 consecutive POTRA domains span residues 23–90 (FTIQ…VIER), 91–171 (PTIG…IDEG), 174–262 (AKIT…VHEG), 265–344 (FRWG…IEPG), and 347–421 (IYVN…LTER).

The protein belongs to the BamA family. Part of the Bam complex.

It localises to the cell outer membrane. Functionally, part of the outer membrane protein assembly complex, which is involved in assembly and insertion of beta-barrel proteins into the outer membrane. The protein is Outer membrane protein assembly factor BamA of Neisseria meningitidis serogroup B (strain ATCC BAA-335 / MC58).